The chain runs to 264 residues: THAP domain-containing protein 10 (264 aa).

The segment at 1–90 (MPARCVAAHC…LVAGAVPTLH (90 aa)) adopts a THAP-type zinc-finger fold. 2 disordered regions span residues 90 to 136 (HRVP…PRAG) and 160 to 195 (TQPH…KRPR). The span at 99–122 (GGEEGDQAGRPDTRGELQAARHSE) shows a compositional bias: basic and acidic residues. A compositionally biased stretch (polar residues) spans 160–175 (TQPHADNPSNTVTSVP).

The chain is THAP domain-containing protein 10 (THAP10) from Pongo abelii (Sumatran orangutan).